We begin with the raw amino-acid sequence, 200 residues long: Imidazole glycerol phosphate synthase subunit HisH (200 aa).

The Glutamine amidotransferase type-1 domain maps to Asp-3–Pro-200. Cys-78 acts as the Nucleophile in catalysis. Catalysis depends on residues His-179 and Glu-181.

In terms of assembly, heterodimer of HisH and HisF.

Its subcellular location is the cytoplasm. It catalyses the reaction 5-[(5-phospho-1-deoxy-D-ribulos-1-ylimino)methylamino]-1-(5-phospho-beta-D-ribosyl)imidazole-4-carboxamide + L-glutamine = D-erythro-1-(imidazol-4-yl)glycerol 3-phosphate + 5-amino-1-(5-phospho-beta-D-ribosyl)imidazole-4-carboxamide + L-glutamate + H(+). The catalysed reaction is L-glutamine + H2O = L-glutamate + NH4(+). It functions in the pathway amino-acid biosynthesis; L-histidine biosynthesis; L-histidine from 5-phospho-alpha-D-ribose 1-diphosphate: step 5/9. In terms of biological role, IGPS catalyzes the conversion of PRFAR and glutamine to IGP, AICAR and glutamate. The HisH subunit catalyzes the hydrolysis of glutamine to glutamate and ammonia as part of the synthesis of IGP and AICAR. The resulting ammonia molecule is channeled to the active site of HisF. The polypeptide is Imidazole glycerol phosphate synthase subunit HisH (Xanthomonas euvesicatoria pv. vesicatoria (strain 85-10) (Xanthomonas campestris pv. vesicatoria)).